The primary structure comprises 356 residues: S-adenosylmethionine:tRNA ribosyltransferase-isomerase (356 aa).

This sequence belongs to the QueA family. As to quaternary structure, monomer.

Its subcellular location is the cytoplasm. It carries out the reaction 7-aminomethyl-7-carbaguanosine(34) in tRNA + S-adenosyl-L-methionine = epoxyqueuosine(34) in tRNA + adenine + L-methionine + 2 H(+). The protein operates within tRNA modification; tRNA-queuosine biosynthesis. Its function is as follows. Transfers and isomerizes the ribose moiety from AdoMet to the 7-aminomethyl group of 7-deazaguanine (preQ1-tRNA) to give epoxyqueuosine (oQ-tRNA). In Xanthomonas euvesicatoria pv. vesicatoria (strain 85-10) (Xanthomonas campestris pv. vesicatoria), this protein is S-adenosylmethionine:tRNA ribosyltransferase-isomerase.